The sequence spans 272 residues: GTP cyclohydrolase FolE2 (272 aa).

This sequence belongs to the GTP cyclohydrolase IV family.

The enzyme catalyses GTP + H2O = 7,8-dihydroneopterin 3'-triphosphate + formate + H(+). The protein operates within cofactor biosynthesis; 7,8-dihydroneopterin triphosphate biosynthesis; 7,8-dihydroneopterin triphosphate from GTP: step 1/1. Its function is as follows. Converts GTP to 7,8-dihydroneopterin triphosphate. The protein is GTP cyclohydrolase FolE2 of Aromatoleum aromaticum (strain DSM 19018 / LMG 30748 / EbN1) (Azoarcus sp. (strain EbN1)).